A 261-amino-acid chain; its full sequence is Imidazole glycerol phosphate synthase subunit HisF (261 aa).

Residues Asp11 and Asp130 contribute to the active site.

This sequence belongs to the HisA/HisF family. In terms of assembly, heterodimer of HisH and HisF.

The protein localises to the cytoplasm. The enzyme catalyses 5-[(5-phospho-1-deoxy-D-ribulos-1-ylimino)methylamino]-1-(5-phospho-beta-D-ribosyl)imidazole-4-carboxamide + L-glutamine = D-erythro-1-(imidazol-4-yl)glycerol 3-phosphate + 5-amino-1-(5-phospho-beta-D-ribosyl)imidazole-4-carboxamide + L-glutamate + H(+). It participates in amino-acid biosynthesis; L-histidine biosynthesis; L-histidine from 5-phospho-alpha-D-ribose 1-diphosphate: step 5/9. In terms of biological role, IGPS catalyzes the conversion of PRFAR and glutamine to IGP, AICAR and glutamate. The HisF subunit catalyzes the cyclization activity that produces IGP and AICAR from PRFAR using the ammonia provided by the HisH subunit. The chain is Imidazole glycerol phosphate synthase subunit HisF from Limosilactobacillus fermentum (strain NBRC 3956 / LMG 18251) (Lactobacillus fermentum).